The sequence spans 1460 residues: Nonribosomal peptide synthetase 6 (1460 aa).

Positions 63–468 are adenylation; it reads EQAALHPEKI…GRQDQQVKLR (406 aa). The 76-residue stretch at 600 to 675 folds into the Carrier 1 domain; it reads EPTTEMEIKL…AMATKIKPLS (76 aa). At serine 636 the chain carries O-(pantetheine 4'-phosphoryl)serine. The interval 712–1135 is condensation; sequence VQDVYPCTPL…AVLDPSEAQD (424 aa). 2 consecutive Carrier domains span residues 1168-1241 and 1236-1312; these read SPNE…GNEK and SIGN…EETD. O-(pantetheine 4'-phosphoryl)serine is present on residues serine 1202 and serine 1273. A disordered region spans residues 1303-1324; sequence ELASSAEETDSPQTETNSNAPY. The segment covering 1313–1322 has biased composition (polar residues); the sequence is SPQTETNSNA.

This sequence belongs to the NRP synthetase family.

Its pathway is siderophore biosynthesis. Its function is as follows. NRPS involved in extracellular coprogen-type siderophores biosynthesis. The role of extracellular siderophores in fungal virulence to plants is to supply iron to the fungus during plant infection, but not to act as phytotoxins, depriving their hosts of iron. This Alternaria brassicicola (Dark leaf spot agent) protein is Nonribosomal peptide synthetase 6.